Consider the following 408-residue polypeptide: Peptidase T (408 aa).

Zn(2+) is bound at residue H78. Residue D80 is part of the active site. Residue D140 participates in Zn(2+) binding. E174 serves as the catalytic Proton acceptor. Zn(2+)-binding residues include E175, D197, and H379.

Belongs to the peptidase M20B family. Zn(2+) is required as a cofactor.

The protein resides in the cytoplasm. It catalyses the reaction Release of the N-terminal residue from a tripeptide.. Cleaves the N-terminal amino acid of tripeptides. This is Peptidase T from Staphylococcus aureus (strain Mu3 / ATCC 700698).